The following is a 276-amino-acid chain: 2,3,4,5-tetrahydropyridine-2,6-dicarboxylate N-succinyltransferase (276 aa).

Substrate contacts are provided by arginine 104 and aspartate 141.

It belongs to the transferase hexapeptide repeat family. In terms of assembly, homotrimer.

It localises to the cytoplasm. The catalysed reaction is (S)-2,3,4,5-tetrahydrodipicolinate + succinyl-CoA + H2O = (S)-2-succinylamino-6-oxoheptanedioate + CoA. It participates in amino-acid biosynthesis; L-lysine biosynthesis via DAP pathway; LL-2,6-diaminopimelate from (S)-tetrahydrodipicolinate (succinylase route): step 1/3. The chain is 2,3,4,5-tetrahydropyridine-2,6-dicarboxylate N-succinyltransferase from Legionella pneumophila (strain Corby).